The sequence spans 206 residues: VEL1-related protein YOR387C (206 aa).

Residues 1–19 (MSFLNIFTFFSVLVSVATA) form the signal peptide. Asn-26, Asn-48, Asn-91, Asn-139, Asn-152, and Asn-183 each carry an N-linked (GlcNAc...) asparagine glycan.

This sequence belongs to the VEL1 family. N-glycosylated.

The protein resides in the cytoplasm. The protein localises to the cytosol. In Saccharomyces cerevisiae (strain ATCC 204508 / S288c) (Baker's yeast), this protein is VEL1-related protein YOR387C.